Reading from the N-terminus, the 340-residue chain is NADH-quinone oxidoreductase subunit H (340 aa).

8 consecutive transmembrane segments (helical) span residues 4–24 (TIGI…PLLI), 78–98 (YLFV…WAVI), 113–133 (VLYL…AGWA), 151–171 (VSYE…AGSM), 184–204 (MLHW…IAGI), 244–264 (SMIL…LSPF), 273–293 (IFFV…FLFV), and 316–336 (VLIP…VAHV).

The protein belongs to the complex I subunit 1 family. In terms of assembly, NDH-1 is composed of 14 different subunits. Subunits NuoA, H, J, K, L, M, N constitute the membrane sector of the complex.

It is found in the cell inner membrane. The catalysed reaction is a quinone + NADH + 5 H(+)(in) = a quinol + NAD(+) + 4 H(+)(out). Its function is as follows. NDH-1 shuttles electrons from NADH, via FMN and iron-sulfur (Fe-S) centers, to quinones in the respiratory chain. The immediate electron acceptor for the enzyme in this species is believed to be ubiquinone. Couples the redox reaction to proton translocation (for every two electrons transferred, four hydrogen ions are translocated across the cytoplasmic membrane), and thus conserves the redox energy in a proton gradient. This subunit may bind ubiquinone. This is NADH-quinone oxidoreductase subunit H from Legionella pneumophila (strain Corby).